The following is a 269-amino-acid chain: MIEQQAGSRIRVEALAIDGQEHAAQWAQRLGLPLHDADADFALQLTDDGLQLQQLGDDVPGAVRVDFVEGAVAHRRLFGGGTGQMIAKAVGIQPGIRPSVLDATAGLGKDAFVLASLGCEMSLIERQPIIAALLEDGLARGRGDRDIGPIIARMRLLTGNSIEIIRSWVEEPPQVIYLDPMFPHREKTALVKKEMRLFRPLVGDDMDAPALLAAALALATHRVVVKRPRKAPCIDGPKPGYALDGKSSRYDIYPRKALKPKAVEPAPDL.

S-adenosyl-L-methionine contacts are provided by residues 125 to 126 (ER) and aspartate 179.

This sequence belongs to the methyltransferase superfamily. RsmJ family.

Its subcellular location is the cytoplasm. The enzyme catalyses guanosine(1516) in 16S rRNA + S-adenosyl-L-methionine = N(2)-methylguanosine(1516) in 16S rRNA + S-adenosyl-L-homocysteine + H(+). In terms of biological role, specifically methylates the guanosine in position 1516 of 16S rRNA. This Pseudomonas syringae pv. tomato (strain ATCC BAA-871 / DC3000) protein is Ribosomal RNA small subunit methyltransferase J.